Reading from the N-terminus, the 284-residue chain is Acetylglutamate kinase (284 aa).

Substrate-binding positions include G54 to G55, R76, and N179.

Belongs to the acetylglutamate kinase family. ArgB subfamily.

The protein localises to the cytoplasm. The enzyme catalyses N-acetyl-L-glutamate + ATP = N-acetyl-L-glutamyl 5-phosphate + ADP. It functions in the pathway amino-acid biosynthesis; L-arginine biosynthesis; N(2)-acetyl-L-ornithine from L-glutamate: step 2/4. Catalyzes the ATP-dependent phosphorylation of N-acetyl-L-glutamate. The protein is Acetylglutamate kinase of Sorangium cellulosum (strain So ce56) (Polyangium cellulosum (strain So ce56)).